We begin with the raw amino-acid sequence, 233 residues long: Large ribosomal subunit protein uL1 (233 aa).

Belongs to the universal ribosomal protein uL1 family. In terms of assembly, part of the 50S ribosomal subunit.

Its function is as follows. Binds directly to 23S rRNA. The L1 stalk is quite mobile in the ribosome, and is involved in E site tRNA release. Protein L1 is also a translational repressor protein, it controls the translation of the L11 operon by binding to its mRNA. The polypeptide is Large ribosomal subunit protein uL1 (Psychrobacter cryohalolentis (strain ATCC BAA-1226 / DSM 17306 / VKM B-2378 / K5)).